We begin with the raw amino-acid sequence, 40 residues long: Photosystem II reaction center protein J (40 aa).

A helical membrane pass occupies residues 8-28; that stretch reads IPLWIIGTVTGIPVIGLIGIF.

This sequence belongs to the PsbJ family. In terms of assembly, PSII is composed of 1 copy each of membrane proteins PsbA, PsbB, PsbC, PsbD, PsbE, PsbF, PsbH, PsbI, PsbJ, PsbK, PsbL, PsbM, PsbT, PsbX, PsbY, PsbZ, Psb30/Ycf12, at least 3 peripheral proteins of the oxygen-evolving complex and a large number of cofactors. It forms dimeric complexes.

The protein resides in the plastid. The protein localises to the chloroplast thylakoid membrane. Its function is as follows. One of the components of the core complex of photosystem II (PSII). PSII is a light-driven water:plastoquinone oxidoreductase that uses light energy to abstract electrons from H(2)O, generating O(2) and a proton gradient subsequently used for ATP formation. It consists of a core antenna complex that captures photons, and an electron transfer chain that converts photonic excitation into a charge separation. The protein is Photosystem II reaction center protein J of Citrus sinensis (Sweet orange).